A 165-amino-acid chain; its full sequence is Growth arrest and DNA damage-inducible protein GADD45 alpha (165 aa).

Thr-2 carries the post-translational modification Phosphothreonine.

This sequence belongs to the GADD45 family. In terms of assembly, interacts with AURKA, PCNA, GADD45GIP1 and MAPK14.

It localises to the nucleus. Functionally, might affect PCNA interaction with some CDK (cell division protein kinase) complexes; stimulates DNA excision repair in vitro and inhibits entry of cells into S phase. In T-cells, functions as a regulator of p38 MAPKs by inhibiting p88 phosphorylation and activity. In Felis catus (Cat), this protein is Growth arrest and DNA damage-inducible protein GADD45 alpha (GADD45A).